Consider the following 333-residue polypeptide: Leucine carboxyl methyltransferase 1 (333 aa).

Residues lysine 42, arginine 82, glycine 107, aspartate 131, 181 to 182 (DL), and glutamate 208 contribute to the S-adenosyl-L-methionine site.

This sequence belongs to the methyltransferase superfamily. LCMT family.

The enzyme catalyses [phosphatase 2A protein]-C-terminal L-leucine + S-adenosyl-L-methionine = [phosphatase 2A protein]-C-terminal L-leucine methyl ester + S-adenosyl-L-homocysteine. In terms of biological role, methylates the carboxyl group of the C-terminal leucine residue of protein phosphatase 2A catalytic subunits to form alpha-leucine ester residues. The chain is Leucine carboxyl methyltransferase 1 from Caenorhabditis elegans.